The primary structure comprises 536 residues: Phosphoenolpyruvate carboxykinase (ATP) (536 aa).

Substrate is bound by residues Arg-61, Tyr-195, and Lys-201. Residues Lys-201, His-220, and 236–244 contribute to the ATP site; that span reads GLSGTGKTT. Mn(2+) is bound by residues Lys-201 and His-220. Residue Asp-257 participates in Mn(2+) binding. ATP-binding residues include Glu-285, Arg-323, and Thr-448. A substrate-binding site is contributed by Arg-323.

The protein belongs to the phosphoenolpyruvate carboxykinase (ATP) family. The cofactor is Mn(2+).

The protein resides in the cytoplasm. The catalysed reaction is oxaloacetate + ATP = phosphoenolpyruvate + ADP + CO2. The protein operates within carbohydrate biosynthesis; gluconeogenesis. Functionally, involved in the gluconeogenesis. Catalyzes the conversion of oxaloacetate (OAA) to phosphoenolpyruvate (PEP) through direct phosphoryl transfer between the nucleoside triphosphate and OAA. The chain is Phosphoenolpyruvate carboxykinase (ATP) from Methylobacterium nodulans (strain LMG 21967 / CNCM I-2342 / ORS 2060).